Consider the following 391-residue polypeptide: Chaperone protein DnaJ (391 aa).

Positions 4–68 (DFYDVLGVSR…ETRQQYDQLG (65 aa)) constitute a J domain. Over residues 53–79 (DVLTDEETRQQYDQLGHERFEEAEKRG) the composition is skewed to basic and acidic residues. Disordered regions lie at residues 53–94 (DVLT…MGGA) and 117–136 (FFGGAGGGGGRGRSGPEQGR). Gly residues-rich tracts occupy residues 81 to 94 (TGNGGGGAGGMGGA) and 119 to 129 (GGAGGGGGRGR). The CR-type zinc finger occupies 152-234 (GVSKQVTVRR…CGGQGQTRER (83 aa)). Residues Cys165, Cys168, Cys182, Cys185, Cys208, Cys211, Cys222, and Cys225 each coordinate Zn(2+). CXXCXGXG motif repeat units lie at residues 165–172 (CADCGGSG), 182–189 (CPQCDGQG), 208–215 (CSRCGGEG), and 222–229 (CSTCGGQG).

Belongs to the DnaJ family. As to quaternary structure, homodimer. It depends on Zn(2+) as a cofactor.

It is found in the cytoplasm. Functionally, participates actively in the response to hyperosmotic and heat shock by preventing the aggregation of stress-denatured proteins and by disaggregating proteins, also in an autonomous, DnaK-independent fashion. Unfolded proteins bind initially to DnaJ; upon interaction with the DnaJ-bound protein, DnaK hydrolyzes its bound ATP, resulting in the formation of a stable complex. GrpE releases ADP from DnaK; ATP binding to DnaK triggers the release of the substrate protein, thus completing the reaction cycle. Several rounds of ATP-dependent interactions between DnaJ, DnaK and GrpE are required for fully efficient folding. Also involved, together with DnaK and GrpE, in the DNA replication of plasmids through activation of initiation proteins. This Halobacterium salinarum (strain ATCC 29341 / DSM 671 / R1) protein is Chaperone protein DnaJ.